A 405-amino-acid chain; its full sequence is Lipase lipl-1 (405 aa).

The first 20 residues, 1-20, serve as a signal peptide directing secretion; the sequence is MRSWSTVMLAVLATAATVFG. Residue asparagine 66 is glycosylated (N-linked (GlcNAc...) asparagine). Residue serine 169 is the Nucleophile of the active site. Asparagine 273 is a glycosylation site (N-linked (GlcNAc...) asparagine). Active-site charge relay system residues include aspartate 344 and histidine 376.

The protein belongs to the AB hydrolase superfamily. Lipase family.

The protein resides in the secreted. It localises to the lysosome lumen. Its function is as follows. Lipase that, together with lipl-3, plays a role in the response to nutrient deprivation by controlling lipid metabolism. Specifically, involved in the breakdown of lipids during lipophagy, a process during which lipids contained in lipid droplets that have been delivered to lysosomes by autophagy are degraded. The chain is Lipase lipl-1 from Caenorhabditis elegans.